The sequence spans 124 residues: Large ribosomal subunit protein bL21 (124 aa).

A disordered region spans residues 105–124; sequence TVKAEPKSKRAPAPEAAADA. Residues 115-124 are compositionally biased toward low complexity; sequence APAPEAAADA.

This sequence belongs to the bacterial ribosomal protein bL21 family. Part of the 50S ribosomal subunit. Contacts protein L20.

This protein binds to 23S rRNA in the presence of protein L20. This chain is Large ribosomal subunit protein bL21, found in Xanthobacter autotrophicus (strain ATCC BAA-1158 / Py2).